We begin with the raw amino-acid sequence, 418 residues long: Glutamyl-tRNA reductase (418 aa).

Substrate is bound by residues 49-52 (TCNR), serine 108, 113-115 (EPQ), and glutamine 119. The active-site Nucleophile is the cysteine 50. An NADP(+)-binding site is contributed by 188-193 (GAGETI).

This sequence belongs to the glutamyl-tRNA reductase family. In terms of assembly, homodimer.

The enzyme catalyses (S)-4-amino-5-oxopentanoate + tRNA(Glu) + NADP(+) = L-glutamyl-tRNA(Glu) + NADPH + H(+). Its pathway is porphyrin-containing compound metabolism; protoporphyrin-IX biosynthesis; 5-aminolevulinate from L-glutamyl-tRNA(Glu): step 1/2. Functionally, catalyzes the NADPH-dependent reduction of glutamyl-tRNA(Glu) to glutamate 1-semialdehyde (GSA). This chain is Glutamyl-tRNA reductase, found in Aliivibrio fischeri (strain MJ11) (Vibrio fischeri).